A 370-amino-acid chain; its full sequence is Glutamate 5-kinase (370 aa).

Residue Lys17 coordinates ATP. 3 residues coordinate substrate: Ser56, Asp143, and Asn155. Residue 175–176 (SD) coordinates ATP. Residues 280 to 357 (RGTIRVDAGA…AEIVAILGYS (78 aa)) form the PUA domain.

Belongs to the glutamate 5-kinase family.

The protein resides in the cytoplasm. The catalysed reaction is L-glutamate + ATP = L-glutamyl 5-phosphate + ADP. Its pathway is amino-acid biosynthesis; L-proline biosynthesis; L-glutamate 5-semialdehyde from L-glutamate: step 1/2. Its function is as follows. Catalyzes the transfer of a phosphate group to glutamate to form L-glutamate 5-phosphate. The chain is Glutamate 5-kinase from Cereibacter sphaeroides (strain ATCC 17023 / DSM 158 / JCM 6121 / CCUG 31486 / LMG 2827 / NBRC 12203 / NCIMB 8253 / ATH 2.4.1.) (Rhodobacter sphaeroides).